The following is a 205-amino-acid chain: Holliday junction branch migration complex subunit RuvA (205 aa).

Positions 1 to 64 (MIGKLKGILE…EEAIRLFGFV (64 aa)) are domain I. The tract at residues 65–143 (AKAEQEWFCL…PFNDNALHFT (79 aa)) is domain II. Residues 144–149 (PQPHLE) form a flexible linker region. Positions 150–205 (VTHQPTNDALSALVKLGFERDQAARALALAMNALEGETVSSALLIRHSLKLLSPST) are domain III.

Belongs to the RuvA family. As to quaternary structure, homotetramer. Forms an RuvA(8)-RuvB(12)-Holliday junction (HJ) complex. HJ DNA is sandwiched between 2 RuvA tetramers; dsDNA enters through RuvA and exits via RuvB. An RuvB hexamer assembles on each DNA strand where it exits the tetramer. Each RuvB hexamer is contacted by two RuvA subunits (via domain III) on 2 adjacent RuvB subunits; this complex drives branch migration. In the full resolvosome a probable DNA-RuvA(4)-RuvB(12)-RuvC(2) complex forms which resolves the HJ.

The protein resides in the cytoplasm. In terms of biological role, the RuvA-RuvB-RuvC complex processes Holliday junction (HJ) DNA during genetic recombination and DNA repair, while the RuvA-RuvB complex plays an important role in the rescue of blocked DNA replication forks via replication fork reversal (RFR). RuvA specifically binds to HJ cruciform DNA, conferring on it an open structure. The RuvB hexamer acts as an ATP-dependent pump, pulling dsDNA into and through the RuvAB complex. HJ branch migration allows RuvC to scan DNA until it finds its consensus sequence, where it cleaves and resolves the cruciform DNA. This is Holliday junction branch migration complex subunit RuvA from Bartonella quintana (strain Toulouse) (Rochalimaea quintana).